The following is a 354-amino-acid chain: Threonine synthase (354 aa).

Lys-61 bears the N6-(pyridoxal phosphate)lysine mark. Pyridoxal 5'-phosphate-binding positions include Asn-87, 187–191 (GNAGN), and Thr-316.

It belongs to the threonine synthase family. Pyridoxal 5'-phosphate is required as a cofactor.

The catalysed reaction is O-phospho-L-homoserine + H2O = L-threonine + phosphate. It participates in amino-acid biosynthesis; L-threonine biosynthesis; L-threonine from L-aspartate: step 5/5. Catalyzes the gamma-elimination of phosphate from L-phosphohomoserine and the beta-addition of water to produce L-threonine. This is Threonine synthase (thrC) from Halalkalibacterium halodurans (strain ATCC BAA-125 / DSM 18197 / FERM 7344 / JCM 9153 / C-125) (Bacillus halodurans).